Consider the following 297-residue polypeptide: Transmembrane protein 169 (297 aa).

The segment at 1 to 84 (MEEPALVEGQ…PKEEEGDDFI (84 aa)) is disordered. The Extracellular segment spans residues 1-159 (MEEPALVEGQ…CQLGADRGPH (159 aa)). Polar residues predominate over residues 9–18 (GQSQLPSPHH). The segment covering 60 to 84 (ETLDEEPGESEGGDQPKEEEGDDFI) has biased composition (acidic residues). A helical transmembrane segment spans residues 160–180 (VVLWTLVCLPVVFLLSFVVSF). Topologically, residues 181–210 (YYGTITWYNIFLVYNEERTFWHKISCCPCL) are cytoplasmic. A helical transmembrane segment spans residues 211-231 (ILCYPVLIMAMASSLGLYAAV). At 232–297 (VQLSWSWEAW…ATQEIETSAV (66 aa)) the chain is on the extracellular side.

The protein resides in the membrane. This chain is Transmembrane protein 169 (TMEM169), found in Bos taurus (Bovine).